The sequence spans 291 residues: Aspartate carbamoyltransferase catalytic subunit (291 aa).

The carbamoyl phosphate site is built by R49 and T50. Residue K77 participates in L-aspartate binding. Carbamoyl phosphate is bound by residues R99, H127, and Q130. The L-aspartate site is built by R160 and R210. Carbamoyl phosphate-binding residues include G249 and P250.

Belongs to the aspartate/ornithine carbamoyltransferase superfamily. ATCase family. Heterododecamer (2C3:3R2) of six catalytic PyrB chains organized as two trimers (C3), and six regulatory PyrI chains organized as three dimers (R2).

It carries out the reaction carbamoyl phosphate + L-aspartate = N-carbamoyl-L-aspartate + phosphate + H(+). Its pathway is pyrimidine metabolism; UMP biosynthesis via de novo pathway; (S)-dihydroorotate from bicarbonate: step 2/3. Functionally, catalyzes the condensation of carbamoyl phosphate and aspartate to form carbamoyl aspartate and inorganic phosphate, the committed step in the de novo pyrimidine nucleotide biosynthesis pathway. In Sulfurimonas denitrificans (strain ATCC 33889 / DSM 1251) (Thiomicrospira denitrificans (strain ATCC 33889 / DSM 1251)), this protein is Aspartate carbamoyltransferase catalytic subunit.